We begin with the raw amino-acid sequence, 398 residues long: Aspartic protease 3 (398 aa).

A signal peptide spans 1–17 (MSGRVFLLLALVALASA). Positions 18–55 (IQRIKLEKRTYTREQYKFGSIQEHLKAKYVPGYIPNKD) are cleaved as a propeptide — removed in mature form. The 324-residue stretch at 69–392 (YYGPVTIGTP…DHGNKRVGFA (324 aa)) folds into the Peptidase A1 domain. Residue D87 is part of the active site. C100 and C107 form a disulfide bridge. D279 is a catalytic residue. A disulfide bridge connects residues C313 and C351. The N-linked (GlcNAc...) asparagine glycan is linked to N321.

Belongs to the peptidase A1 family. In terms of tissue distribution, highly expressed in intestine and to a lower extent in body wall muscles, hypodermis and neurons.

The protein resides in the cytoplasm. Its subcellular location is the lysosome. It is found in the secreted. Aspartic protease. Part of the necrosis cell death pathway. Involved in neuronal cell degeneration. Involved in heat stress response. The protein is Aspartic protease 3 of Caenorhabditis elegans.